The chain runs to 541 residues: Presenilin homolog (541 aa).

Polar residues-rich tracts occupy residues 1 to 14 and 43 to 52; these read MAAVNLQASCSSGL and NNYGSSNQDQ. Disordered stretches follow at residues 1–52 and 69–92; these read MAAV…NQDQ and CGSRPSRLTGGGGGSGGPPTNEME. Residues 1-106 are Cytoplasmic-facing; that stretch reads MAAVNLQASC…LKYGAQHVIK (106 aa). A helical transmembrane segment spans residues 107–127; the sequence is LFVPVSLCMLVVVATINSISF. The Lumenal portion of the chain corresponds to 128–154; the sequence is YNSTDVYLLYTPFHEQSPEPSVKFWSA. N-linked (GlcNAc...) asparagine glycosylation is present at Asn129. Residues 155–175 form a helical membrane-spanning segment; sequence LANSLILMSVVVVMTFLLIVL. The Cytoplasmic segment spans residues 176–182; sequence YKKRCYR. The chain crosses the membrane as a helical span at residues 183-203; the sequence is IIHGWLILSSFMLLFIFTYLY. Residues 204 to 216 are Lumenal-facing; that stretch reads LEELLRAYNIPMD. The helical transmembrane segment at 217-237 threads the bilayer; that stretch reads YPTALLIMWNFGVVGMMSIHW. Over 238–242 the chain is Cytoplasmic; the sequence is QGPLR. A helical transmembrane segment spans residues 243–263; sequence LQQGYLIFVAALMALVFIKYL. The Lumenal portion of the chain corresponds to 264 to 265; the sequence is PE. The chain crosses the membrane as a helical span at residues 266 to 286; it reads WTAWAVLAAISIWDLIAVLSP. The active site involves Asp279. Residues 287–453 are Cytoplasmic-facing; sequence RGPLRILVET…QNHPDGQEER (167 aa). Residues 320–481 form an interaction with Mettl2 region; that stretch reads NTVTPQQSQA…ASSYGDWTTT (162 aa). Low complexity predominate over residues 327–350; sequence SQATASSSPSSSNSTTTTRATQNS. Disordered stretches follow at residues 327 to 379 and 421 to 449; these read SQAT…DGSV and EVQSTQSGNAQRSNEYRTVTAPDQNHPDG. 2 stretches are compositionally biased toward polar residues: residues 361-370 and 421-443; these read GQRTGNSHPR and EVQSTQSGNAQRSNEYRTVTAPD. The chain crosses the membrane as a helical span at residues 454–474; it reads GIKLGLGDFIFYSVLVGKASS. The active site involves Asp461. Residues 475–481 are Lumenal-facing; sequence YGDWTTT. Residues 482 to 502 traverse the membrane as a helical segment; that stretch reads IACFVAILIGLCLTLLLLAIW. The Cytoplasmic segment spans residues 503-506; sequence RKAL. Positions 507 to 509 match the PAL motif; that stretch reads PAL. Residues 507–527 constitute an intramembrane region (helical); it reads PALPISITFGLIFCFATSAVV. Over 528–541 the chain is Cytoplasmic; it reads KPFMEDLSAKQVFI.

This sequence belongs to the peptidase A22A family. Homodimer. Component of the gamma-secretase complex, a complex composed of a presenilin (Psn) homodimer, nicastrin (Nct), Aph-1 and Pen-2. Interacts with Mettl2. Isoform 2 shows a better interaction with Mettl2 than isoform 1. In terms of processing, cleaved. The cleavage, which probably takes place between the 6th and the 7th transmembrane regions, may be required for activation of the gamma-secretase activity. In terms of tissue distribution, maternally expressed in nurse and follicle cells. In early embryos, expressed in all or most cells and later increases in CNS and epidermal tissues. In larvae, expression is seen in all imaginal disks, brain and optic lobes. In pupae, expression is seen in eye disk and brain.

Its subcellular location is the endoplasmic reticulum membrane. The protein resides in the golgi apparatus membrane. Functionally, probable catalytic subunit of the gamma-secretase complex, an endoprotease complex that catalyzes the intramembrane cleavage of integral membrane proteins such as Notch receptor. Required for S3 cleavage of Notch, which releases activated Notch protein from the cell membrane. Involved in the patterning of the optic lobes. This Drosophila melanogaster (Fruit fly) protein is Presenilin homolog (Psn).